A 709-amino-acid polypeptide reads, in one-letter code: Protein IMPAIRED IN BABA-INDUCED STERILITY 1 (709 aa).

The N-myristoyl glycine moiety is linked to residue Gly-2. The tract at residues 53–80 (SGKKSSSKKSGSELGSDFGELSESGRAS) is disordered. The region spanning 131–418 (FEKLEKIGQG…ASTALVSQYF (288 aa)) is the Protein kinase domain. ATP-binding positions include 137 to 145 (IGQGTYSSV) and Lys-160. Asp-255 functions as the Proton acceptor in the catalytic mechanism. Disordered regions lie at residues 434–536 (SPSK…PFSG) and 566–609 (SRGH…QDRE). The segment covering 437-449 (KEIDAKHREDTTR) has biased composition (basic and acidic residues). A compositionally biased stretch (basic residues) spans 484 to 494 (HSQKFQKRNGH). Polar residues predominate over residues 495–505 (SVHNSIDSDST). 2 stretches are compositionally biased toward basic and acidic residues: residues 509-523 (KMQKPSNHEKDEASH) and 586-609 (VDSKNNEKEKEEKHGERTDSQDRE).

It belongs to the protein kinase superfamily. Ser/Thr protein kinase family.

Required for beta-aminobutyric acid (BABA)-induced resistance (BABA-IR) against bacteria (e.g. P.syringae) and oomycetes (e.g. H.parasitica) via priming for salicylate (SA)-dependent defense responses such as pathogenesis-related PR-1 gene expression and trailing necrosis. Involved in BABA-mediated sterility. Necessary for the inheritance of BABA-priming to next generation, especially for the primed to be primed phenotype which consists in an enhanced second BABA-priming in transgenerationally primed plants. This Arabidopsis thaliana (Mouse-ear cress) protein is Protein IMPAIRED IN BABA-INDUCED STERILITY 1.